We begin with the raw amino-acid sequence, 232 residues long: Aquaporin Z (232 aa).

The next 2 helical transmembrane spans lie at 8-28 (AFGTFWLVLGGCGSAVLAAGF) and 33-53 (IGLLGVALAFGLTVLTMAFAI). The NPA 1 motif lies at 62–64 (NPA). The next 3 helical transmembrane spans lie at 84-104 (IIAQVIGGLIAGGILYVIATG), 130-150 (MLAALVSEIVMTMMFLIVIMG), and 159-179 (GFAPIAIGLCLTLIHLISIPV). The short motif at 185–187 (NPA) is the NPA 2 element. A helical membrane pass occupies residues 201–221 (VSQLWLFWVAPIVGGVLGAVI).

The protein belongs to the MIP/aquaporin (TC 1.A.8) family. Homotetramer.

It localises to the cell inner membrane. It carries out the reaction H2O(in) = H2O(out). Functionally, channel that permits osmotically driven movement of water in both directions. It is involved in the osmoregulation and in the maintenance of cell turgor during volume expansion in rapidly growing cells. It mediates rapid entry or exit of water in response to abrupt changes in osmolarity. The polypeptide is Aquaporin Z (Vibrio parahaemolyticus serotype O3:K6 (strain RIMD 2210633)).